The primary structure comprises 277 residues: MGIKHYKPTSPGIRQMTRHTFEELTSTRPEKSLLERLTRKAGRNVYGRITVRHRGGGHKRMYRIIDFKRNEFDGIPAKVVSIEYDPNRTCRIAKVVYANGAKRYILHPVGLNVGDTVVSGPDADIKVGNALPLENIPVGTIVHNIELYPGRGGQLVRSAGASAQIMAKEGRYALLRLPSGEQRKVLLACRATVGQVGNLEHENIVIGKAGRKRHLGFRPAVRGVVMNPVDHPHGGGEGRSPIGMPSPVTPWGKPTLGYKTRKPNKKSDRLIVSRRKK.

The tract at residues methionine 226–lysine 277 is disordered.

The protein belongs to the universal ribosomal protein uL2 family. As to quaternary structure, part of the 50S ribosomal subunit. Forms a bridge to the 30S subunit in the 70S ribosome.

In terms of biological role, one of the primary rRNA binding proteins. Required for association of the 30S and 50S subunits to form the 70S ribosome, for tRNA binding and peptide bond formation. It has been suggested to have peptidyltransferase activity; this is somewhat controversial. Makes several contacts with the 16S rRNA in the 70S ribosome. The sequence is that of Large ribosomal subunit protein uL2 from Symbiobacterium thermophilum (strain DSM 24528 / JCM 14929 / IAM 14863 / T).